A 443-amino-acid polypeptide reads, in one-letter code: Chromosome partition protein MukF (443 aa).

The leucine-zipper stretch occupies residues 209–237; sequence LDETSGNLRELQDTLNAAGDKLQAQLLRI.

It belongs to the MukF family. Interacts, and probably forms a ternary complex, with MukE and MukB via its C-terminal region. The complex formation is stimulated by calcium or magnesium. It is required for an interaction between MukE and MukB.

The protein localises to the cytoplasm. It is found in the nucleoid. Functionally, involved in chromosome condensation, segregation and cell cycle progression. May participate in facilitating chromosome segregation by condensation DNA from both sides of a centrally located replisome during cell division. Not required for mini-F plasmid partitioning. Probably acts via its interaction with MukB and MukE. Overexpression results in anucleate cells. It has a calcium binding activity. The protein is Chromosome partition protein MukF of Actinobacillus pleuropneumoniae serotype 7 (strain AP76).